The sequence spans 196 residues: Pyridoxine/pyridoxamine 5'-phosphate oxidase (196 aa).

FMN contacts are provided by residues R44–K49, Y59–T60, R65, K66, and Q88. K49 is a binding site for substrate. Substrate-binding residues include Y106, R110, and S114. FMN contacts are provided by residues Q123 to S124 and W169. R175–H177 lines the substrate pocket. Position 179 (R179) interacts with FMN.

This sequence belongs to the pyridoxamine 5'-phosphate oxidase family. Homodimer. The cofactor is FMN.

It carries out the reaction pyridoxamine 5'-phosphate + O2 + H2O = pyridoxal 5'-phosphate + H2O2 + NH4(+). It catalyses the reaction pyridoxine 5'-phosphate + O2 = pyridoxal 5'-phosphate + H2O2. The protein operates within cofactor metabolism; pyridoxal 5'-phosphate salvage; pyridoxal 5'-phosphate from pyridoxamine 5'-phosphate: step 1/1. It participates in cofactor metabolism; pyridoxal 5'-phosphate salvage; pyridoxal 5'-phosphate from pyridoxine 5'-phosphate: step 1/1. Its function is as follows. Catalyzes the oxidation of either pyridoxine 5'-phosphate (PNP) or pyridoxamine 5'-phosphate (PMP) into pyridoxal 5'-phosphate (PLP). This chain is Pyridoxine/pyridoxamine 5'-phosphate oxidase, found in Alkalilimnicola ehrlichii (strain ATCC BAA-1101 / DSM 17681 / MLHE-1).